Here is a 269-residue protein sequence, read N- to C-terminus: Formamidopyrimidine-DNA glycosylase (269 aa).

The active-site Schiff-base intermediate with DNA is the Pro-2. Glu-3 acts as the Proton donor in catalysis. Lys-57 functions as the Proton donor; for beta-elimination activity in the catalytic mechanism. DNA is bound by residues His-90, Arg-109, and Lys-150. An FPG-type zinc finger spans residues 235 to 269; the sequence is QVYGRAGEPCRACGTPIESAKHGQRSTFFCPRCQR. Arg-259 functions as the Proton donor; for delta-elimination activity in the catalytic mechanism.

The protein belongs to the FPG family. As to quaternary structure, monomer. Zn(2+) serves as cofactor.

It carries out the reaction Hydrolysis of DNA containing ring-opened 7-methylguanine residues, releasing 2,6-diamino-4-hydroxy-5-(N-methyl)formamidopyrimidine.. The catalysed reaction is 2'-deoxyribonucleotide-(2'-deoxyribose 5'-phosphate)-2'-deoxyribonucleotide-DNA = a 3'-end 2'-deoxyribonucleotide-(2,3-dehydro-2,3-deoxyribose 5'-phosphate)-DNA + a 5'-end 5'-phospho-2'-deoxyribonucleoside-DNA + H(+). In terms of biological role, involved in base excision repair of DNA damaged by oxidation or by mutagenic agents. Acts as a DNA glycosylase that recognizes and removes damaged bases. Has a preference for oxidized purines, such as 7,8-dihydro-8-oxoguanine (8-oxoG). Has AP (apurinic/apyrimidinic) lyase activity and introduces nicks in the DNA strand. Cleaves the DNA backbone by beta-delta elimination to generate a single-strand break at the site of the removed base with both 3'- and 5'-phosphates. This is Formamidopyrimidine-DNA glycosylase from Serratia proteamaculans (strain 568).